The sequence spans 128 residues: Large ribosomal subunit protein bL12 (128 aa).

It belongs to the bacterial ribosomal protein bL12 family. Homodimer. Part of the ribosomal stalk of the 50S ribosomal subunit. Forms a multimeric L10(L12)X complex, where L10 forms an elongated spine to which 2 to 4 L12 dimers bind in a sequential fashion. Binds GTP-bound translation factors.

Functionally, forms part of the ribosomal stalk which helps the ribosome interact with GTP-bound translation factors. Is thus essential for accurate translation. In Synechocystis sp. (strain ATCC 27184 / PCC 6803 / Kazusa), this protein is Large ribosomal subunit protein bL12.